Here is a 268-residue protein sequence, read N- to C-terminus: Sexual development regulator velC (268 aa).

The segment covering 1–13 (MPHGFDKLLHPEP) has biased composition (basic and acidic residues). 2 disordered regions span residues 1 to 124 (MPHG…DNFS) and 142 to 165 (DPDP…NPPH). Residues 14–26 (EPQSPSPPPPPRR) show a composition bias toward pro residues. The region spanning 28–257 (STQSRYHLHI…ELGFVELKTR (230 aa)) is the Velvet domain. Basic and acidic residues predominate over residues 92-121 (DGNRDREREREHERERERERETDGVARTDD).

Belongs to the velvet family. VelC subfamily. In terms of assembly, interacts with velA and vosA.

Its subcellular location is the nucleus. In terms of biological role, velvet-domain-containing protein that acts as a positive regulator of sexual development. This Penicillium rubens (strain ATCC 28089 / DSM 1075 / NRRL 1951 / Wisconsin 54-1255) (Penicillium chrysogenum) protein is Sexual development regulator velC.